The primary structure comprises 162 residues: Ribosome maturation factor RimM (162 aa).

Residues 86 to 160 (EGRYYYFALI…GIHVDPIPGL (75 aa)) enclose the PRC barrel domain.

This sequence belongs to the RimM family. In terms of assembly, binds ribosomal protein uS19.

It localises to the cytoplasm. Functionally, an accessory protein needed during the final step in the assembly of 30S ribosomal subunit, possibly for assembly of the head region. Essential for efficient processing of 16S rRNA. May be needed both before and after RbfA during the maturation of 16S rRNA. It has affinity for free ribosomal 30S subunits but not for 70S ribosomes. This chain is Ribosome maturation factor RimM, found in Thermus thermophilus (strain ATCC BAA-163 / DSM 7039 / HB27).